The chain runs to 331 residues: Hyaluronidase A (331 aa).

2 disulfide bridges follow: C19-C308 and C185-C197. N-linked (GlcNAc...) asparagine glycans are attached at residues N79 and N99. E109 serves as the catalytic Proton donor. A glycan (N-linked (GlcNAc...) asparagine) is linked at N127. An N-linked (GlcNAc...) asparagine glycan is attached at N325.

It belongs to the glycosyl hydrolase 56 family. In terms of tissue distribution, expressed by the venom gland.

The protein resides in the secreted. The enzyme catalyses Random hydrolysis of (1-&gt;4)-linkages between N-acetyl-beta-D-glucosamine and D-glucuronate residues in hyaluronate.. Functionally, hydrolyzes high molecular weight hyaluronic acid to produce small oligosaccharides. The sequence is that of Hyaluronidase A from Vespula vulgaris (Yellow jacket).